The following is a 211-amino-acid chain: Holliday junction resolvase RecU (211 aa).

T87, D89, D102, and Q121 together coordinate Mg(2+).

The protein belongs to the RecU family. The cofactor is Mg(2+).

The protein localises to the cytoplasm. It catalyses the reaction Endonucleolytic cleavage at a junction such as a reciprocal single-stranded crossover between two homologous DNA duplexes (Holliday junction).. Functionally, endonuclease that resolves Holliday junction intermediates in genetic recombination. Cleaves mobile four-strand junctions by introducing symmetrical nicks in paired strands. Promotes annealing of linear ssDNA with homologous dsDNA. Required for DNA repair, homologous recombination and chromosome segregation. This Limosilactobacillus fermentum (strain NBRC 3956 / LMG 18251) (Lactobacillus fermentum) protein is Holliday junction resolvase RecU.